The following is a 118-amino-acid chain: Large ribosomal subunit protein bL20 (118 aa).

This sequence belongs to the bacterial ribosomal protein bL20 family.

Its function is as follows. Binds directly to 23S ribosomal RNA and is necessary for the in vitro assembly process of the 50S ribosomal subunit. It is not involved in the protein synthesizing functions of that subunit. The protein is Large ribosomal subunit protein bL20 of Pseudomonas fluorescens (strain ATCC BAA-477 / NRRL B-23932 / Pf-5).